We begin with the raw amino-acid sequence, 354 residues long: Isocitrate dehydrogenase [NAD] regulatory subunit A, mitochondrial (354 aa).

Residues Ser95, Asn97, Arg101, Arg111, and Arg132 each coordinate substrate. Mg(2+)-binding residues include Asp219, Asp243, and Asp247. NADP(+) contacts are provided by residues 276 to 282 (HGTAPDI) and Asn289.

It belongs to the isocitrate and isopropylmalate dehydrogenases family. Heterooligomer of catalytic and regulatory subunits. Mg(2+) serves as cofactor. It depends on Mn(2+) as a cofactor.

It is found in the mitochondrion. It catalyses the reaction D-threo-isocitrate + NAD(+) = 2-oxoglutarate + CO2 + NADH. Functionally, performs an essential role in the oxidative function of the citric acid cycle. The sequence is that of Isocitrate dehydrogenase [NAD] regulatory subunit A, mitochondrial (idhA) from Dictyostelium discoideum (Social amoeba).